We begin with the raw amino-acid sequence, 238 residues long: Cysteine-rich venom protein (238 aa).

Residues 1-19 form the signal peptide; it reads MIAFIVLLSLAAVLQQSSG. In terms of domain architecture, SCP spans 38 to 164; the sequence is VDKHNALRRS…STKYLYVCQY (127 aa). Cystine bridges form between Cys75/Cys153, Cys92/Cys165, Cys148/Cys162, Cys184/Cys191, Cys187/Cys196, Cys200/Cys233, Cys209/Cys227, and Cys218/Cys231. The 34-residue stretch at 200–233 folds into the ShKT domain; it reads CKYEDAFTNCKALAKKTKCKTEWIKSKCPATCFC.

This sequence belongs to the CRISP family. Expressed by the venom gland.

Its subcellular location is the secreted. Its function is as follows. Blocks contraction of smooth muscle elicited by high potassium-induced depolarization, but does not block caffeine-stimulated contraction. May target voltage-gated calcium channels on smooth muscle. The sequence is that of Cysteine-rich venom protein from Austrelaps superbus (Lowland copperhead snake).